A 469-amino-acid polypeptide reads, in one-letter code: Tubulin gamma-1 chain (469 aa).

142–148 provides a ligand contact to GTP; sequence AGGTGSG.

Belongs to the tubulin family.

Its subcellular location is the cytoplasm. It is found in the cytoskeleton. The protein localises to the microtubule organizing center. Functionally, tubulin is the major constituent of microtubules. The gamma chain is found at microtubule organizing centers (MTOC) such as the spindle poles, suggesting that it is involved in the minus-end nucleation of microtubule assembly. The chain is Tubulin gamma-1 chain (TUBG1) from Zea mays (Maize).